Reading from the N-terminus, the 266-residue chain is MLTKRIIACLDVTGGRVVKGVNFVGLRDAGDPVAVAARYNAQGADELAFLDITATSDERDLILPIIEAVASQVFIPLTVGGGVRTQADVRRLLNAGADKVSFNSAAIADPQVIDTASAKYGAQCIVVAIDARRRSAEESRRITAGGRAIGPGWDVYSHGGRRNTGLDALAWAVEMQRRGAGEILLTSMDRDGTRIGFDLELTRAVSDAVGLPVIASGGVGTLDHLADGIQTGGADAVLAASIFHYGEYTVGQAKQHLAGRGIAVRR.

Active-site residues include Asp-11 and Asp-130.

The protein belongs to the HisA/HisF family. As to quaternary structure, heterodimer of HisH and HisF.

The protein localises to the cytoplasm. The catalysed reaction is 5-[(5-phospho-1-deoxy-D-ribulos-1-ylimino)methylamino]-1-(5-phospho-beta-D-ribosyl)imidazole-4-carboxamide + L-glutamine = D-erythro-1-(imidazol-4-yl)glycerol 3-phosphate + 5-amino-1-(5-phospho-beta-D-ribosyl)imidazole-4-carboxamide + L-glutamate + H(+). It functions in the pathway amino-acid biosynthesis; L-histidine biosynthesis; L-histidine from 5-phospho-alpha-D-ribose 1-diphosphate: step 5/9. Functionally, IGPS catalyzes the conversion of PRFAR and glutamine to IGP, AICAR and glutamate. The HisF subunit catalyzes the cyclization activity that produces IGP and AICAR from PRFAR using the ammonia provided by the HisH subunit. The chain is Imidazole glycerol phosphate synthase subunit HisF from Verminephrobacter eiseniae (strain EF01-2).